The sequence spans 271 residues: Formamidopyrimidine-DNA glycosylase (271 aa).

Proline 2 serves as the catalytic Schiff-base intermediate with DNA. The active-site Proton donor is glutamate 3. Lysine 58 acts as the Proton donor; for beta-elimination activity in catalysis. DNA is bound by residues histidine 91, arginine 110, and arginine 152. An FPG-type zinc finger spans residues 237–271; sequence SVYGRNDAPCPGCGAPIRRSRQGGRSTYFCDRCQH. The active-site Proton donor; for delta-elimination activity is the arginine 261.

The protein belongs to the FPG family. Monomer. Requires Zn(2+) as cofactor.

It carries out the reaction Hydrolysis of DNA containing ring-opened 7-methylguanine residues, releasing 2,6-diamino-4-hydroxy-5-(N-methyl)formamidopyrimidine.. It catalyses the reaction 2'-deoxyribonucleotide-(2'-deoxyribose 5'-phosphate)-2'-deoxyribonucleotide-DNA = a 3'-end 2'-deoxyribonucleotide-(2,3-dehydro-2,3-deoxyribose 5'-phosphate)-DNA + a 5'-end 5'-phospho-2'-deoxyribonucleoside-DNA + H(+). In terms of biological role, involved in base excision repair of DNA damaged by oxidation or by mutagenic agents. Acts as a DNA glycosylase that recognizes and removes damaged bases. Has a preference for oxidized purines, such as 7,8-dihydro-8-oxoguanine (8-oxoG). Has AP (apurinic/apyrimidinic) lyase activity and introduces nicks in the DNA strand. Cleaves the DNA backbone by beta-delta elimination to generate a single-strand break at the site of the removed base with both 3'- and 5'-phosphates. This Geotalea uraniireducens (strain Rf4) (Geobacter uraniireducens) protein is Formamidopyrimidine-DNA glycosylase.